Reading from the N-terminus, the 325-residue chain is MSETATWQPSASIPNLLKRAAIMAEIRRFFADRGVLEVETPCMSQATVTDIHLFPFETRFVGPGHSQGINLYLMTSPEYHMKRLLAAGCGPVFQLCRSFRNEEMGRHHNPEFTMLEWYRPHYDMYRLMNEVDDLLQQVLDCQPAESLSYQQAFQGHLEIDPLSADKTQLREAVAKLDLSNIADTEEDRDTLLQLLLTMGVEPHIGKEKPTFIYHFPASQASLAQISTEDHRVAERFEVYYKGIELANGFHELTDAREQQQRFEQDNRKRAARGLPQQPIDQNLLDALAAGLPDCSGVALGVDRLVMLALGAESLADVIAFTVDRA.

76 to 78 provides a ligand contact to substrate; it reads SPE. Residues 100–102 and asparagine 109 contribute to the ATP site; that span reads RNE. Tyrosine 118 is a binding site for substrate. 244-245 lines the ATP pocket; sequence EL. Glutamate 251 is a binding site for substrate. An ATP-binding site is contributed by glycine 300.

It belongs to the class-II aminoacyl-tRNA synthetase family. EpmA subfamily. In terms of assembly, homodimer.

The catalysed reaction is D-beta-lysine + L-lysyl-[protein] + ATP = N(6)-((3R)-3,6-diaminohexanoyl)-L-lysyl-[protein] + AMP + diphosphate + H(+). In terms of biological role, with EpmB is involved in the beta-lysylation step of the post-translational modification of translation elongation factor P (EF-P) on 'Lys-34'. Catalyzes the ATP-dependent activation of (R)-beta-lysine produced by EpmB, forming a lysyl-adenylate, from which the beta-lysyl moiety is then transferred to the epsilon-amino group of EF-P 'Lys-34'. This Salmonella gallinarum (strain 287/91 / NCTC 13346) protein is Elongation factor P--(R)-beta-lysine ligase.